Consider the following 357-residue polypeptide: Peptide chain release factor 1 (357 aa).

Position 236 is an N5-methylglutamine (glutamine 236).

This sequence belongs to the prokaryotic/mitochondrial release factor family. Post-translationally, methylated by PrmC. Methylation increases the termination efficiency of RF1.

It is found in the cytoplasm. Its function is as follows. Peptide chain release factor 1 directs the termination of translation in response to the peptide chain termination codons UAG and UAA. In Mycobacterium marinum (strain ATCC BAA-535 / M), this protein is Peptide chain release factor 1.